Reading from the N-terminus, the 378-residue chain is MNLFGKVVSFSRGKLNNDTQRVTAWQNEAVEYTSAFVTNIHNKIANEITKVEFNHVKYKKSDVGSDTLISMAGSDLDEVLNWSPKGERNSMDFWRKVIKKLLRAPYVDLYAVFDDNTGELLDLLFADDKKEYKPEELVRLTSPFYINEDTSILDNALASIQTKLEQGKLRGLLKINAFLDIDNTQEYREKALTTIKNMQEGSSYNGLTPVDNKTEIVELKKDYSVLNKDEIDLIKSELLTGYFMNENILLGTASQEQQIYFYNSTIIPLLIQLEKELTYKLISTNRRRVVKGNLYYERIIVDNQLFKFATLKELIDLYHENINGPIFTQNQLLVKMGEQPIEGGDVYIANLNAVAVKNLSDLQGSRKDVTSTDETNNQ.

It belongs to the skunalikevirus portal protein family. As to quaternary structure, homododecamer.

The protein resides in the virion. Functionally, forms the portal vertex of the capsid. This portal plays critical roles in head assembly, genome packaging, neck/tail attachment, and genome ejection. The portal protein multimerizes as a single ring-shaped homododecamer arranged around a central channel. Binds to the terminase subunits to form the packaging machine. Necessary to ensure correct procapsid size during capsid assembly. Once the capsid is packaged with the DNA, the terminase complex is substituted by the connector proteins gp15. This is Probable portal protein from Lactococcus phage p2 (Lactococcus lactis bacteriophage p2).